Consider the following 452-residue polypeptide: Caspase-2 (452 aa).

Residue Ala-2 is modified to N-acetylalanine. Residues 2-169 (AAPSAGSWST…TVEHSLDNKD (168 aa)) constitute a propeptide that is removed on maturation. The 90-residue stretch at 32 to 121 (MHPHHQETLK…GHLEDMLLTT (90 aa)) folds into the CARD domain. Residue Ser-157 is modified to Phosphoserine. Active-site residues include His-277 and Cys-320. Residues 326-333 (DRGVDQQD) constitute a propeptide that is removed on maturation. Over residues 327 to 336 (RGVDQQDGKN) the composition is skewed to basic and acidic residues. The disordered stretch occupies residues 327–354 (RGVDQQDGKNHAGSPGCEESDAGKEKLP). At Ser-340 the chain carries Phosphoserine.

The protein belongs to the peptidase C14A family. As to quaternary structure, heterotetramer that consists of two anti-parallel arranged heterodimers, each one formed by a p18 subunit and a p12 subunit. Forms a complex named the PIDDosome with PIDD1 and CRADD. Interacts with NOL3 (via CARD domain); inhibits CASP2 activity in a phosphorylation-dependent manner. Post-translationally, the mature protease can process its own propeptide, but not that of other caspases. As to expression, expressed at higher levels in the embryonic lung, liver and kidney than in the heart and brain. In adults, higher level expression is seen in the placenta, lung, kidney, and pancreas than in the heart, brain, liver and skeletal muscle.

The enzyme catalyses Strict requirement for an Asp residue at P1, with 316-Asp being essential for proteolytic activity and has a preferred cleavage sequence of Val-Asp-Val-Ala-Asp-|-.. Functionally, is a regulator of the cascade of caspases responsible for apoptosis execution. Might function by either activating some proteins required for cell death or inactivating proteins necessary for cell survival. Associates with PIDD1 and CRADD to form the PIDDosome, a complex that activates CASP2 and triggers apoptosis in response to genotoxic stress. Acts as a positive regulator of apoptosis. In terms of biological role, acts as a negative regulator of apoptosis. Its function is as follows. May function as an endogenous apoptosis inhibitor that antagonizes caspase activation and cell death. The chain is Caspase-2 (CASP2) from Homo sapiens (Human).